We begin with the raw amino-acid sequence, 468 residues long: Ribulose bisphosphate carboxylase large chain (468 aa).

Residue Lys-5 is modified to N6,N6,N6-trimethyllysine. Positions 114 and 164 each coordinate substrate. Lys-166 functions as the Proton acceptor in the catalytic mechanism. Lys-168 contacts substrate. The Mg(2+) site is built by Lys-192, Asp-194, and Glu-195. N6-carboxylysine is present on Lys-192. His-285 functions as the Proton acceptor in the catalytic mechanism. Residues Arg-286, His-318, and Ser-370 each coordinate substrate.

The protein belongs to the RuBisCO large chain family. Type I subfamily. As to quaternary structure, heterohexadecamer of 8 large chains and 8 small chains; disulfide-linked. The disulfide link is formed within the large subunit homodimers. It depends on Mg(2+) as a cofactor. The disulfide bond which can form in the large chain dimeric partners within the hexadecamer appears to be associated with oxidative stress and protein turnover.

The protein localises to the plastid. It localises to the chloroplast. The catalysed reaction is 2 (2R)-3-phosphoglycerate + 2 H(+) = D-ribulose 1,5-bisphosphate + CO2 + H2O. The enzyme catalyses D-ribulose 1,5-bisphosphate + O2 = 2-phosphoglycolate + (2R)-3-phosphoglycerate + 2 H(+). RuBisCO catalyzes two reactions: the carboxylation of D-ribulose 1,5-bisphosphate, the primary event in carbon dioxide fixation, as well as the oxidative fragmentation of the pentose substrate in the photorespiration process. Both reactions occur simultaneously and in competition at the same active site. The protein is Ribulose bisphosphate carboxylase large chain of Anthospermum herbaceum.